The following is a 400-amino-acid chain: NADH-quinone oxidoreductase subunit D (400 aa).

It belongs to the complex I 49 kDa subunit family. NDH-1 is composed of 14 different subunits. Subunits NuoB, C, D, E, F, and G constitute the peripheral sector of the complex.

The protein localises to the cell inner membrane. It carries out the reaction a quinone + NADH + 5 H(+)(in) = a quinol + NAD(+) + 4 H(+)(out). Functionally, NDH-1 shuttles electrons from NADH, via FMN and iron-sulfur (Fe-S) centers, to quinones in the respiratory chain. The immediate electron acceptor for the enzyme in this species is believed to be a menaquinone. Couples the redox reaction to proton translocation (for every two electrons transferred, four hydrogen ions are translocated across the cytoplasmic membrane), and thus conserves the redox energy in a proton gradient. The protein is NADH-quinone oxidoreductase subunit D of Chlorobium phaeobacteroides (strain DSM 266 / SMG 266 / 2430).